Here is a 201-residue protein sequence, read N- to C-terminus: Recombination protein RecR (201 aa).

The C4-type zinc finger occupies 60 to 75 (CTSCGNVDTSDPCTIC). The Toprim domain occupies 83–178 (TTLVVVEDVS…KVTRLAHGVP (96 aa)).

This sequence belongs to the RecR family.

Functionally, may play a role in DNA repair. It seems to be involved in an RecBC-independent recombinational process of DNA repair. It may act with RecF and RecO. This chain is Recombination protein RecR, found in Methylobacterium radiotolerans (strain ATCC 27329 / DSM 1819 / JCM 2831 / NBRC 15690 / NCIMB 10815 / 0-1).